Consider the following 421-residue polypeptide: Adenylosuccinate synthetase (421 aa).

GTP contacts are provided by residues 11–17 and 39–41; these read GDEGKGK and GHT. The Proton acceptor role is filled by Asp-12. The Mg(2+) site is built by Asp-12 and Gly-39. IMP contacts are provided by residues 12–15, 37–40, Thr-129, Arg-143, Asn-219, Thr-234, and Arg-298; these read DEGK and NAGH. His-40 functions as the Proton donor in the catalytic mechanism. A substrate-binding site is contributed by 294 to 300; it reads VTTGRRR. GTP-binding positions include Arg-300, 326 to 328, and 409 to 411; these read KLD and GTG.

Belongs to the adenylosuccinate synthetase family. Homodimer. Mg(2+) serves as cofactor.

The protein resides in the cytoplasm. The catalysed reaction is IMP + L-aspartate + GTP = N(6)-(1,2-dicarboxyethyl)-AMP + GDP + phosphate + 2 H(+). It functions in the pathway purine metabolism; AMP biosynthesis via de novo pathway; AMP from IMP: step 1/2. Its function is as follows. Plays an important role in the de novo pathway and in the salvage pathway of purine nucleotide biosynthesis. Catalyzes the first committed step in the biosynthesis of AMP from IMP. This chain is Adenylosuccinate synthetase, found in Paracoccidioides brasiliensis (strain Pb03).